A 372-amino-acid polypeptide reads, in one-letter code: Homoserine dehydrogenase (372 aa).

Positions 13, 15, 16, and 99 each coordinate NAD(+). Residues V16 and T99 each contribute to the NADP(+) site. NADPH is bound by residues V16, T99, S100, and K123. NADP(+) is bound at residue K123. Na(+) is bound by residues E150, V153, A155, and L157. 2 residues coordinate NADP(+): G216 and E219. 2 residues coordinate L-homoserine: E219 and D230. The active-site Proton donor is K234. G352 is a binding site for NAD(+). Residue G352 participates in NADP(+) binding. G352 is an NADPH binding site.

It belongs to the homoserine dehydrogenase family. Homodimer. A metal cation serves as cofactor.

The enzyme catalyses L-homoserine + NADP(+) = L-aspartate 4-semialdehyde + NADPH + H(+). It carries out the reaction L-homoserine + NAD(+) = L-aspartate 4-semialdehyde + NADH + H(+). It functions in the pathway amino-acid biosynthesis; L-methionine biosynthesis via de novo pathway; L-homoserine from L-aspartate: step 3/3. Its pathway is amino-acid biosynthesis; L-threonine biosynthesis; L-threonine from L-aspartate: step 3/5. Functionally, catalyzes the conversion of L-aspartate-beta-semialdehyde (L-Asa) to L-homoserine (L-Hse), the third step in the biosynthesis of amino acids that derive from aspartate (the aspartate family of amino acids), including methioinine and threonine, the latter of which is a precursor to isoleucine; production of homoserine leads to a branch-point in the pathway as it can either be O-phosphorylated for processing to threonine, or O-acylated for processing to methionine. This Paracoccidioides brasiliensis (strain Pb18) protein is Homoserine dehydrogenase.